A 299-amino-acid polypeptide reads, in one-letter code: Acidic endochitinase Pun g 14, amyloplastic (299 aa).

An amyloplast-targeting transit peptide spans 1–26 (MAKTLPFSRALLLSLSILLVARAISA). In terms of domain architecture, GH18 spans 27 to 299 (GDIAIYWGQN…TYSTTIKDQV (273 aa)). 2 disulfide bridges follow: Cys46–Cys93 and Cys76–Cys83. Glu153 acts as the Proton donor in catalysis. Residues Cys185 and Cys216 are joined by a disulfide bond.

It belongs to the glycosyl hydrolase 18 family. Chitinase class III subfamily. As to quaternary structure, monomer. In terms of tissue distribution, highly expressed in seeds and to a lesser extent in the skin of the pomegranate fruit (at protein level). Not expressed in leaves or flesh of the fruit (at protein level).

Its subcellular location is the plastid. The protein localises to the amyloplast. It carries out the reaction Random endo-hydrolysis of N-acetyl-beta-D-glucosaminide (1-&gt;4)-beta-linkages in chitin and chitodextrins.. With respect to regulation, activity is not affected by addition of 10 mM Ca(2+) or removal of Ca(2+). Its function is as follows. Hydrolyzes chitin. Probable calcium storage protein of the seeds. Binds calcium ions with high capacity and low affinity. Involved in seed germination. The polypeptide is Acidic endochitinase Pun g 14, amyloplastic (Punica granatum (Pomegranate)).